Here is a 310-residue protein sequence, read N- to C-terminus: Thioredoxin reductase (310 aa).

Residue 35-42 participates in FAD binding; sequence ERGMPGGQ. A disulfide bridge links C134 with C137. FAD is bound at residue 277 to 286; the sequence is DVRDKGLRQI.

It belongs to the class-II pyridine nucleotide-disulfide oxidoreductase family. Homodimer. FAD is required as a cofactor.

It is found in the cytoplasm. It carries out the reaction [thioredoxin]-dithiol + NADP(+) = [thioredoxin]-disulfide + NADPH + H(+). This Staphylococcus epidermidis (strain ATCC 35984 / DSM 28319 / BCRC 17069 / CCUG 31568 / BM 3577 / RP62A) protein is Thioredoxin reductase (trxB).